Reading from the N-terminus, the 127-residue chain is Cytochrome c' (127 aa).

Position 1 is a pyrrolidone carboxylic acid (Q1). Heme c-binding residues include R12, Q13, D67, C116, C119, and H120.

Homodimer. Binds 1 heme c group covalently per subunit.

The protein localises to the periplasm. In terms of biological role, cytochrome c' is the most widely occurring bacterial c-type cytochrome. Cytochromes c' are high-spin proteins and the heme has no sixth ligand. Their exact function is not known. This chain is Cytochrome c', found in Alcaligenes xylosoxydans xylosoxydans (Achromobacter xylosoxidans).